A 325-amino-acid chain; its full sequence is Aldose 1-epimerase (325 aa).

A substrate-binding site is contributed by 73 to 74 (NR). Histidine 177 (proton donor) is an active-site residue. Aspartate 230 contacts substrate. The active-site Proton acceptor is glutamate 283.

This sequence belongs to the aldose epimerase family.

The catalysed reaction is alpha-D-glucose = beta-D-glucose. Its pathway is carbohydrate metabolism; hexose metabolism. The sequence is that of Aldose 1-epimerase (galM) from Bacillus subtilis (strain 168).